Here is a 799-residue protein sequence, read N- to C-terminus: DISARM protein DrmE (799 aa).

It localises to the cytoplasm. Component of antiviral defense system DISARM (defense island system associated with restriction-modification), composed of DrmE, DrmA, DrmB, DrmC and DrmMII. DISARM is probably a multi-gene restriction module, this subunit has an unknown function. Expression of DISARM in B.subtilis (strain BEST7003) confers resistance to phages Nf, phi29, phi105, phi3T, SPO1, SPR and SPP1. Protection is over 10(7)-fold against phi3T, 10(4)-10(5)-fold against Nf, phi29, phi105 and SPR, 100-fold against SPO1 and 10-fold against SPP1. DISARM does not interfere with phage adsorption, but instead interferes with (phi3T) DNA replication early in its cycle, preventing replication, circularization and lysogeny and probably causes phage DNA degradation (DNA is degraded in SPP1-infected cells). The protein is DISARM protein DrmE of Bacillus paralicheniformis (strain ATCC 9945a / NCIMB 11709 / CD-2).